A 194-amino-acid chain; its full sequence is Ras-related protein Rab-22A (194 aa).

12-20 (GDTGVGKSS) provides a ligand contact to GTP. An Effector region motif is present at residues 34–42 (INPTIGASF). Residues 60–64 (DTAGQ), 118–121 (NKCD), and 148–150 (SAK) each bind GTP. Residues 174 to 194 (PSGGKGFKLRRQPSEPKRSCC) are disordered. Positions 185-194 (QPSEPKRSCC) are enriched in basic and acidic residues. Residues Cys193 and Cys194 are each lipidated (S-geranylgeranyl cysteine).

This sequence belongs to the small GTPase superfamily. Rab family. As to quaternary structure, interacts directly with ZFYVE20. Binds EEA1. Interacts (in its GTP-bound form) with RABGEF1. Interacts (in its GTP-bound form) with RINL.

It is found in the endosome membrane. The protein resides in the cell membrane. It localises to the early endosome. The protein localises to the late endosome. Its subcellular location is the cell projection. It is found in the ruffle. The protein resides in the cytoplasmic vesicle. It localises to the phagosome. The protein localises to the phagosome membrane. In terms of biological role, plays a role in endocytosis and intracellular protein transport. Mediates trafficking of TF from early endosomes to recycling endosomes. Required for NGF-mediated endocytosis of NTRK1, and subsequent neurite outgrowth. Binds GTP and GDP and has low GTPase activity. Alternates between a GTP-bound active form and a GDP-bound inactive form. This Homo sapiens (Human) protein is Ras-related protein Rab-22A (RAB22A).